Here is a 317-residue protein sequence, read N- to C-terminus: Glycine--tRNA ligase alpha subunit (317 aa).

Belongs to the class-II aminoacyl-tRNA synthetase family. In terms of assembly, tetramer of two alpha and two beta subunits.

It is found in the cytoplasm. The catalysed reaction is tRNA(Gly) + glycine + ATP = glycyl-tRNA(Gly) + AMP + diphosphate. The sequence is that of Glycine--tRNA ligase alpha subunit from Lactococcus lactis subsp. cremoris (strain SK11).